The following is a 71-amino-acid chain: Bowman-Birk type trypsin inhibitor (71 aa).

Cystine bridges form between C10-C67, C11-C27, C14-C63, C17-C25, C35-C42, and C39-C55.

The protein belongs to the Bowman-Birk serine protease inhibitor family.

Its function is as follows. Inhibits trypsin but not chymotrypsin. The chain is Bowman-Birk type trypsin inhibitor from Triticum aestivum (Wheat).